The chain runs to 203 residues: Large ribosomal subunit protein eL15 (203 aa).

Residues 166-203 form a disordered region; that stretch reads ATGKKSRGINKGHRYNNTRSGRRHTWKRQNTQSYWRYR. Positions 169-192 are enriched in basic residues; it reads KKSRGINKGHRYNNTRSGRRHTWK. Residues 193–203 are compositionally biased toward polar residues; the sequence is RQNTQSYWRYR.

This sequence belongs to the eukaryotic ribosomal protein eL15 family.

The sequence is that of Large ribosomal subunit protein eL15 (rpl15) from Aspergillus niger.